A 176-amino-acid chain; its full sequence is Endoribonuclease YbeY (176 aa).

H117, H121, and H127 together coordinate Zn(2+).

It belongs to the endoribonuclease YbeY family. Zn(2+) serves as cofactor.

The protein localises to the cytoplasm. In terms of biological role, single strand-specific metallo-endoribonuclease involved in late-stage 70S ribosome quality control and in maturation of the 3' terminus of the 16S rRNA. This chain is Endoribonuclease YbeY, found in Methylocella silvestris (strain DSM 15510 / CIP 108128 / LMG 27833 / NCIMB 13906 / BL2).